The chain runs to 175 residues: Shikimate kinase (175 aa).

14–19 (GAGKST) is a binding site for ATP. A Mg(2+)-binding site is contributed by Ser-18. 3 residues coordinate substrate: Asp-36, Arg-60, and Gly-82. Arg-120 lines the ATP pocket. Residue Arg-140 coordinates substrate. Gln-157 serves as a coordination point for ATP.

The protein belongs to the shikimate kinase family. Monomer. It depends on Mg(2+) as a cofactor.

The protein resides in the cytoplasm. The catalysed reaction is shikimate + ATP = 3-phosphoshikimate + ADP + H(+). Its pathway is metabolic intermediate biosynthesis; chorismate biosynthesis; chorismate from D-erythrose 4-phosphate and phosphoenolpyruvate: step 5/7. Functionally, catalyzes the specific phosphorylation of the 3-hydroxyl group of shikimic acid using ATP as a cosubstrate. This Mannheimia succiniciproducens (strain KCTC 0769BP / MBEL55E) protein is Shikimate kinase.